Reading from the N-terminus, the 404-residue chain is Nuclear receptor subfamily 2 group F member 6 (404 aa).

Over residues methionine 1–threonine 15 the composition is skewed to gly residues. Residues methionine 1–arginine 49 form a disordered region. The span at alanine 33–alanine 42 shows a compositional bias: low complexity. A phosphoserine mark is found at serine 34 and serine 40. Positions glutamine 53–arginine 128 form a DNA-binding region, nuclear receptor. Residues cysteine 56–cysteine 76 form an NR C4-type zinc finger. A Phosphoserine modification is found at serine 83. An NR C4-type zinc finger spans residues cysteine 92–cysteine 116. The NR LBD domain occupies proline 165–glycine 393. Residues leucine 327–glutamine 404 are important for dimerization.

This sequence belongs to the nuclear hormone receptor family. NR2 subfamily. As to quaternary structure, binds DNA as dimer; homodimer and heterodimer with NR2F2 and probably NR2F1. Interacts with THRB. As to expression, expressed in heart, placenta, liver, skeletal muscle, kidney and pancreas.

Its subcellular location is the nucleus. In terms of biological role, transcription factor predominantly involved in transcriptional repression. Binds to promoter/enhancer response elements that contain the imperfect 5'-AGGTCA-3' direct or inverted repeats with various spacings which are also recognized by other nuclear hormone receptors. Involved in modulation of hormonal responses. Represses transcriptional activity of the lutropin-choriogonadotropic hormone receptor/LHCGR gene, the renin/REN gene and the oxytocin-neurophysin/OXT gene. Represses the triiodothyronine-dependent and -independent transcriptional activity of the thyroid hormone receptor gene in a cell type-specific manner. The corepressing function towards thyroid hormone receptor beta/THRB involves at least in part the inhibition of THRB binding to triiodothyronine response elements (TREs) by NR2F6. Inhibits NFATC transcription factor DNA binding and subsequently its transcriptional activity. Acts as transcriptional repressor of IL-17 expression in Th-17 differentiated CD4(+) T cells and may be involved in induction and/or maintenance of peripheral immunological tolerance and autoimmunity. Involved in development of forebrain circadian clock; is required early in the development of the locus coeruleus (LC). This is Nuclear receptor subfamily 2 group F member 6 (NR2F6) from Homo sapiens (Human).